The following is a 416-amino-acid chain: Advanced glycosylation end product-specific receptor (416 aa).

The signal sequence occupies residues 1-22 (MAAGAVVGAWMLVLSLGGTVTG). Residues 23–115 (DQNITARIGK…KETKSNYRVR (93 aa)) enclose the Ig-like V-type domain. Residues 23–352 (DQNITARIGK…VEGPGLETLA (330 aa)) are Extracellular-facing. Asparagine 25 and asparagine 80 each carry an N-linked (GlcNAc...) asparagine glycan. Intrachain disulfides connect cysteine 38/cysteine 98 and cysteine 143/cysteine 207. Ig-like C2-type domains follow at residues 123–220 (PEIV…RALH) and 238–327 (PNVD…RAVS). A helical membrane pass occupies residues 353-373 (LTLGILGGLGTVALLIGVIVW). The Cytoplasmic portion of the chain corresponds to 374–416 (HRRRQRKGQERKVPENQEEEEEERAELNQPEEPEAAESSTGGP). A disordered region spans residues 377-416 (RQRKGQERKVPENQEEEEEERAELNQPEEPEAAESSTGGP). Over residues 389–408 (NQEEEEEERAELNQPEEPEA) the composition is skewed to acidic residues.

As to quaternary structure, constitutive homodimer; disulfide-linked. Forms homooligomers. Interacts with S100A1 and APP. Interacts with S100B, S100A12 and S100A14. Interacts with TIRAP. Interacts with HMGB1. Interacts with LGP2; this interaction plays an important role in AGER-mediated pro-inflammatory responses and cytokine release. Interacts with double-strand break repair protein MRE11 which is a core component of the MRN complex; the interaction enhances MRE11 endonuclease activity and promotes DNA repair. Interacts with the MCM2-7 complex via interaction with complex member MCM2; the interaction is increased following DNA replication stress and stabilizes the MCM2-7 complex at replication forks. In terms of processing, phosphorylated on its cytoplasmic domain by PKCzeta/PRKCZ upon ligand binding. Phosphorylated by ATM following DNA damage. Post-translationally, targeted by the ubiquitin E3 ligase subunit FBXO10 to mediate its ubiquitination and degradation. In terms of tissue distribution, endothelial cells.

It is found in the cell membrane. The protein localises to the cell projection. It localises to the phagocytic cup. The protein resides in the early endosome. Its subcellular location is the nucleus. Functionally, cell surface pattern recognition receptor that senses endogenous stress signals with a broad ligand repertoire including advanced glycation end products, S100 proteins, high-mobility group box 1 protein/HMGB1, amyloid beta/APP oligomers, nucleic acids, histones, phospholipids and glycosaminoglycans. Advanced glycosylation end products are nonenzymatically glycosylated proteins which accumulate in vascular tissue in aging and at an accelerated rate in diabetes. These ligands accumulate at inflammatory sites during the pathogenesis of various diseases including diabetes, vascular complications, neurodegenerative disorders and cancers, and RAGE transduces their binding into pro-inflammatory responses. Upon ligand binding, uses TIRAP and MYD88 as adapters to transduce the signal ultimately leading to the induction of inflammatory cytokines IL6, IL8 and TNFalpha through activation of NF-kappa-B. Interaction with S100A12 on endothelium, mononuclear phagocytes, and lymphocytes triggers cellular activation, with generation of key pro-inflammatory mediators. Interaction with S100B after myocardial infarction may play a role in myocyte apoptosis by activating ERK1/2 and p53/TP53 signaling. Contributes to the translocation of amyloid-beta peptide (ABPP) across the cell membrane from the extracellular to the intracellular space in cortical neurons. ABPP-initiated RAGE signaling, especially stimulation of p38 mitogen-activated protein kinase (MAPK), has the capacity to drive a transport system delivering ABPP as a complex with RAGE to the intraneuronal space. Participates in endothelial albumin transcytosis together with HMGB1 through the RAGE/SRC/Caveolin-1 pathway, leading to endothelial hyperpermeability. Mediates the loading of HMGB1 in extracellular vesicles (EVs) that shuttle HMGB1 to hepatocytes by transferrin-mediated endocytosis and subsequently promote hepatocyte pyroptosis by activating the NLRP3 inflammasome. Binds to DNA and promotes extracellular hypomethylated DNA (CpG DNA) uptake by cells via the endosomal route to activate inflammatory responses. Mediates phagocytosis by non-professional phagocytes (NPP) and this is enhanced by binding to ligands including RNA, DNA, HMGB1 and histones. Promotes NPP-mediated phagocytosis of Saccharomyces cerevisiae spores by binding to RNA attached to the spore wall. Also promotes NPP-mediated phagocytosis of apoptotic cells. Following DNA damage, recruited to DNA double-strand break sites where it colocalizes with the MRN repair complex via interaction with double-strand break repair protein MRE11. Enhances the endonuclease activity of MRE11, promoting the end resection of damaged DNA. Promotes DNA damage repair in trophoblasts which enhances trophoblast invasion and contributes to placental development and maintenance. Protects cells from DNA replication stress by localizing to damaged replication forks where it stabilizes the MCM2-7 complex and promotes faithful progression of the replication fork. This is Advanced glycosylation end product-specific receptor (AGER) from Bos taurus (Bovine).